Here is a 370-residue protein sequence, read N- to C-terminus: Cytochrome b (370 aa).

4 consecutive transmembrane segments (helical) span residues 30–50 (FGSM…FLAF), 74–96 (WVFR…LHIF), 109–129 (VWMS…MGYV), and 175–195 (FFVL…GHLI). H80 and H94 together coordinate heme b. Residues H179 and H193 each coordinate heme b. Residue H198 participates in a ubiquinone binding. 4 helical membrane passes run 221–240 (YLGK…VLSL), 284–304 (VLGV…ALVN), 316–336 (FLVF…QCTV), and 342–362 (ILSP…LFIF).

This sequence belongs to the cytochrome b family. The main subunits of complex b-c1 are: cytochrome b, cytochrome c1 and the Rieske protein. It depends on heme b as a cofactor.

Its subcellular location is the mitochondrion inner membrane. In terms of biological role, component of the ubiquinol-cytochrome c reductase complex (complex III or cytochrome b-c1 complex) that is part of the mitochondrial respiratory chain. The b-c1 complex mediates electron transfer from ubiquinol to cytochrome c. Contributes to the generation of a proton gradient across the mitochondrial membrane that is then used for ATP synthesis. This Caenorhabditis elegans protein is Cytochrome b.